We begin with the raw amino-acid sequence, 122 residues long: Large ribosomal subunit protein uL14 (122 aa).

It belongs to the universal ribosomal protein uL14 family. As to quaternary structure, part of the 50S ribosomal subunit. Forms a cluster with proteins L3 and L19. In the 70S ribosome, L14 and L19 interact and together make contacts with the 16S rRNA in bridges B5 and B8.

Functionally, binds to 23S rRNA. Forms part of two intersubunit bridges in the 70S ribosome. The sequence is that of Large ribosomal subunit protein uL14 from Picosynechococcus sp. (strain ATCC 27264 / PCC 7002 / PR-6) (Agmenellum quadruplicatum).